We begin with the raw amino-acid sequence, 218 residues long: Guanylate kinase (218 aa).

The Guanylate kinase-like domain occupies 14 to 193 (GLMLVLSSPS…AFAEVRGIVV (180 aa)). 21-28 (SPSGAGKS) provides a ligand contact to ATP.

This sequence belongs to the guanylate kinase family.

Its subcellular location is the cytoplasm. The enzyme catalyses GMP + ATP = GDP + ADP. Its function is as follows. Essential for recycling GMP and indirectly, cGMP. This Mesorhizobium japonicum (strain LMG 29417 / CECT 9101 / MAFF 303099) (Mesorhizobium loti (strain MAFF 303099)) protein is Guanylate kinase (gmk).